A 275-amino-acid chain; its full sequence is Dermonecrotic toxin SpeSicTox-betaIIA3ii (275 aa).

Residue His-5 is part of the active site. The Mg(2+) site is built by Glu-25 and Asp-27. The active-site Nucleophile is the His-41. Intrachain disulfides connect Cys-45–Cys-51 and Cys-47–Cys-190. Asp-85 provides a ligand contact to Mg(2+).

This sequence belongs to the arthropod phospholipase D family. Class II subfamily. It depends on Mg(2+) as a cofactor. As to expression, expressed by the venom gland.

It is found in the secreted. It carries out the reaction an N-(acyl)-sphingosylphosphocholine = an N-(acyl)-sphingosyl-1,3-cyclic phosphate + choline. The enzyme catalyses an N-(acyl)-sphingosylphosphoethanolamine = an N-(acyl)-sphingosyl-1,3-cyclic phosphate + ethanolamine. The catalysed reaction is a 1-acyl-sn-glycero-3-phosphocholine = a 1-acyl-sn-glycero-2,3-cyclic phosphate + choline. It catalyses the reaction a 1-acyl-sn-glycero-3-phosphoethanolamine = a 1-acyl-sn-glycero-2,3-cyclic phosphate + ethanolamine. Its function is as follows. Dermonecrotic toxins cleave the phosphodiester linkage between the phosphate and headgroup of certain phospholipids (sphingolipid and lysolipid substrates), forming an alcohol (often choline) and a cyclic phosphate. This toxin acts on sphingomyelin (SM). It may also act on ceramide phosphoethanolamine (CPE), lysophosphatidylcholine (LPC) and lysophosphatidylethanolamine (LPE), but not on lysophosphatidylserine (LPS), and lysophosphatidylglycerol (LPG). It acts by transphosphatidylation, releasing exclusively cyclic phosphate products as second products. Induces dermonecrosis, hemolysis, increased vascular permeability, edema, inflammatory response, and platelet aggregation. The protein is Dermonecrotic toxin SpeSicTox-betaIIA3ii of Sicarius peruensis (Six-eyed sand spider).